The chain runs to 294 residues: MHPRFQTAFAQLADNLQSALAPILADHHFPAMLTAEQVSTLKNTAGLDEDALAFALLPLAAACARTDLSHFNVGAIARGVSGNWYFGANMEFLGATMQQTVHAEQSAISHAWLRGEKGLAAVTVNYTPCGHCRQFMNELNSGLDLRIHLPGRAPHTLRDYLPDAFGPKDLEIKTLLMDEQDHGFTLTGNTLTQAAITAANKSHMPYSHSPSGVALECKDGRIFTGSYAENAAFNPTLPPLQGALNLLSLNGYDYADIQRAILAEKGDAALIQWDATAATLKALGCHNIDRVLLG.

2 CMP/dCMP-type deaminase domains span residues 48–168 (DEDA…FGPK) and 186–294 (LTGN…VLLG). Residue 89–91 (NME) participates in substrate binding. Histidine 102 is a Zn(2+) binding site. Glutamate 104 functions as the Proton donor in the catalytic mechanism. Positions 129 and 132 each coordinate Zn(2+).

Belongs to the cytidine and deoxycytidylate deaminase family. As to quaternary structure, homodimer. Zn(2+) serves as cofactor.

The enzyme catalyses cytidine + H2O + H(+) = uridine + NH4(+). The catalysed reaction is 2'-deoxycytidine + H2O + H(+) = 2'-deoxyuridine + NH4(+). Functionally, this enzyme scavenges exogenous and endogenous cytidine and 2'-deoxycytidine for UMP synthesis. The sequence is that of Cytidine deaminase from Salmonella typhi.